Reading from the N-terminus, the 663-residue chain is UvrABC system protein B (663 aa).

The region spanning 30-414 (EGIKAGKRHQ…IEHTDKMVEQ (385 aa)) is the Helicase ATP-binding domain. 43-50 (GATGTGKT) is a binding site for ATP. The short motif at 96–119 (YYDYYQPEAYVPSTDTFIEKDASI) is the Beta-hairpin element. The Helicase C-terminal domain maps to 434–600 (QIDDLLSEIQ…TINKKIHDLI (167 aa)). The 36-residue stretch at 627 to 662 (QKTIDNIEKEMKQAAKDLDFEKATELRDMLFELKAE) folds into the UVR domain.

Belongs to the UvrB family. In terms of assembly, forms a heterotetramer with UvrA during the search for lesions. Interacts with UvrC in an incision complex.

Its subcellular location is the cytoplasm. The UvrABC repair system catalyzes the recognition and processing of DNA lesions. A damage recognition complex composed of 2 UvrA and 2 UvrB subunits scans DNA for abnormalities. Upon binding of the UvrA(2)B(2) complex to a putative damaged site, the DNA wraps around one UvrB monomer. DNA wrap is dependent on ATP binding by UvrB and probably causes local melting of the DNA helix, facilitating insertion of UvrB beta-hairpin between the DNA strands. Then UvrB probes one DNA strand for the presence of a lesion. If a lesion is found the UvrA subunits dissociate and the UvrB-DNA preincision complex is formed. This complex is subsequently bound by UvrC and the second UvrB is released. If no lesion is found, the DNA wraps around the other UvrB subunit that will check the other stand for damage. The polypeptide is UvrABC system protein B (Staphylococcus aureus (strain MSSA476)).